Here is a 754-residue protein sequence, read N- to C-terminus: 1,4-alpha-glucan branching enzyme GlgB (754 aa).

D431 acts as the Nucleophile in catalysis. The Proton donor role is filled by E484.

Belongs to the glycosyl hydrolase 13 family. GlgB subfamily. Monomer.

The catalysed reaction is Transfers a segment of a (1-&gt;4)-alpha-D-glucan chain to a primary hydroxy group in a similar glucan chain.. It participates in glycan biosynthesis; glycogen biosynthesis. Catalyzes the formation of the alpha-1,6-glucosidic linkages in glycogen by scission of a 1,4-alpha-linked oligosaccharide from growing alpha-1,4-glucan chains and the subsequent attachment of the oligosaccharide to the alpha-1,6 position. This Prochlorococcus marinus (strain AS9601) protein is 1,4-alpha-glucan branching enzyme GlgB.